Consider the following 144-residue polypeptide: 3-hydroxyacyl-[acyl-carrier-protein] dehydratase FabZ (144 aa).

Residue His48 is part of the active site.

It belongs to the thioester dehydratase family. FabZ subfamily.

Its subcellular location is the cytoplasm. The enzyme catalyses a (3R)-hydroxyacyl-[ACP] = a (2E)-enoyl-[ACP] + H2O. Functionally, involved in unsaturated fatty acids biosynthesis. Catalyzes the dehydration of short chain beta-hydroxyacyl-ACPs and long chain saturated and unsaturated beta-hydroxyacyl-ACPs. The sequence is that of 3-hydroxyacyl-[acyl-carrier-protein] dehydratase FabZ from Listeria monocytogenes serotype 4b (strain CLIP80459).